Reading from the N-terminus, the 132-residue chain is Small ribosomal subunit protein uS8 (132 aa).

It belongs to the universal ribosomal protein uS8 family. In terms of assembly, part of the 30S ribosomal subunit. Contacts proteins S5 and S12.

Functionally, one of the primary rRNA binding proteins, it binds directly to 16S rRNA central domain where it helps coordinate assembly of the platform of the 30S subunit. This Sinorhizobium medicae (strain WSM419) (Ensifer medicae) protein is Small ribosomal subunit protein uS8.